The chain runs to 118 residues: MARIKRGVIAHARHKKILKQAKGYYGARSRIYRVAHQAVIKAGQYAYRDRRQRKRQFRQLWISRINAAVRQSKMSYSNFIFGLKKASINIDRKILSDIAIFDLLSFNALVKKAKEALL.

This sequence belongs to the bacterial ribosomal protein bL20 family.

Its function is as follows. Binds directly to 23S ribosomal RNA and is necessary for the in vitro assembly process of the 50S ribosomal subunit. It is not involved in the protein synthesizing functions of that subunit. The sequence is that of Large ribosomal subunit protein bL20 (rplT) from Buchnera aphidicola subsp. Acyrthosiphon pisum (strain APS) (Acyrthosiphon pisum symbiotic bacterium).